We begin with the raw amino-acid sequence, 231 residues long: Albumin-2 (231 aa).

Hemopexin repeat units lie at residues 4 to 55 (TGYI…FKSL), 62 to 112 (SYGV…FPFF), 118 to 166 (ENGI…FPCF), and 172 to 223 (ESGT…WPSL). Asn-8, Asp-66, Asp-122, and Asp-176 together coordinate Ca(2+).

Monomer and homodimer.

The protein resides in the cytoplasm. The protein localises to the cytosol. Its function is as follows. May play a role in response to oxidative stress and polyamine biosynthesis. The protein is Albumin-2 of Pisum sativum (Garden pea).